A 347-amino-acid chain; its full sequence is Eukaryotic translation initiation factor 3 subunit I (347 aa).

5 WD repeats span residues 8–47 (GHER…RLGT), 50–89 (DHSG…AVHS), 150–190 (EQAT…VQAK), 192–233 (IHEK…KTYK), and 289–328 (GHFG…FDFK).

The protein belongs to the eIF-3 subunit I family. In terms of assembly, component of the eukaryotic translation initiation factor 3 (eIF-3) complex.

It localises to the cytoplasm. Component of the eukaryotic translation initiation factor 3 (eIF-3) complex, which is involved in protein synthesis of a specialized repertoire of mRNAs and, together with other initiation factors, stimulates binding of mRNA and methionyl-tRNAi to the 40S ribosome. The eIF-3 complex specifically targets and initiates translation of a subset of mRNAs involved in cell proliferation. This is Eukaryotic translation initiation factor 3 subunit I from Kluyveromyces lactis (strain ATCC 8585 / CBS 2359 / DSM 70799 / NBRC 1267 / NRRL Y-1140 / WM37) (Yeast).